The chain runs to 172 residues: Small ribosomal subunit protein uS5 (172 aa).

The region spanning 17–80 is the S5 DRBM domain; the sequence is LREKMISVNR…EQARRNMFKV (64 aa).

Belongs to the universal ribosomal protein uS5 family. Part of the 30S ribosomal subunit. Contacts proteins S4 and S8.

Functionally, with S4 and S12 plays an important role in translational accuracy. In terms of biological role, located at the back of the 30S subunit body where it stabilizes the conformation of the head with respect to the body. This chain is Small ribosomal subunit protein uS5, found in Burkholderia lata (strain ATCC 17760 / DSM 23089 / LMG 22485 / NCIMB 9086 / R18194 / 383).